The primary structure comprises 865 residues: Protein fluG (865 aa).

Positions 442–533 (PGVKYVWTQF…VMTWWKSEQG (92 aa)) constitute a GS beta-grasp domain. Positions 540 to 865 (PRTNLLNINN…ARRKWLVERY (326 aa)) constitute a GS catalytic domain.

Belongs to the glutamine synthetase family.

It localises to the cytoplasm. Its function is as follows. May function as a GSI-related enzyme in synthesizing a small diffusible factor that acts as an extracellular signal directing asexual sporulation and perhaps other aspects of colony growth. May be involved in brlA activation (an early transcriptional regulator for conidiation specific gene). The chain is Protein fluG (fluG) from Emericella nidulans (strain FGSC A4 / ATCC 38163 / CBS 112.46 / NRRL 194 / M139) (Aspergillus nidulans).